We begin with the raw amino-acid sequence, 324 residues long: Glyoxylate/hydroxypyruvate reductase B (324 aa).

Active-site residues include Arg237 and Glu266. The active-site Proton donor is His285.

The protein belongs to the D-isomer specific 2-hydroxyacid dehydrogenase family. GhrB subfamily. As to quaternary structure, homodimer.

It localises to the cytoplasm. The catalysed reaction is glycolate + NADP(+) = glyoxylate + NADPH + H(+). It catalyses the reaction (R)-glycerate + NAD(+) = 3-hydroxypyruvate + NADH + H(+). It carries out the reaction (R)-glycerate + NADP(+) = 3-hydroxypyruvate + NADPH + H(+). In terms of biological role, catalyzes the NADPH-dependent reduction of glyoxylate and hydroxypyruvate into glycolate and glycerate, respectively. This chain is Glyoxylate/hydroxypyruvate reductase B, found in Escherichia coli O9:H4 (strain HS).